The primary structure comprises 773 residues: Preaspterpenacid I synthase sttA (773 aa).

Residues 4 to 359 form a sesterterpenoid synthase region; it reads ISDVMKHCVP…RYHRTDLATT (356 aa). A Mg(2+)-binding site is contributed by Asp105. Residue Asp105 coordinates substrate. A substrate region spans residues 211-214; it reads RVNE. A substrate-binding site is contributed by Asn255. Substrate regions lie at residues 259–263 and 350–351; these read SFPKE and RY. The geranylfarnesyl diphosphate synthase stretch occupies residues 360 to 769; it reads AEDRATLIGK…RMMLLGMGPK (410 aa). The tract at residues 423–447 is disordered; that stretch reads AFKKRNSRNGKQNGTEGSKSTFTNG. Residues 431-447 show a composition bias toward polar residues; sequence NGKQNGTEGSKSTFTNG. Lys493, Arg496, and His525 together coordinate isopentenyl diphosphate. The Mg(2+) site is built by Asp532 and Asp536. Arg541 lines the dimethylallyl diphosphate pocket. Arg542 is an isopentenyl diphosphate binding site. Residues Lys614, Thr615, Gln652, Asn659, and Lys669 each coordinate dimethylallyl diphosphate.

The protein in the N-terminal section; belongs to the terpene synthase family. In the C-terminal section; belongs to the FPP/GGPP synthase family.

The enzyme catalyses 4 isopentenyl diphosphate + dimethylallyl diphosphate = (2E,6E,10E,14E)-geranylfarnesyl diphosphate + 4 diphosphate. It catalyses the reaction (2E,6E,10E,14E)-geranylfarnesyl diphosphate + H2O = preaspterpenacid acid I + diphosphate. It functions in the pathway secondary metabolite biosynthesis; terpenoid biosynthesis. Its function is as follows. Sesterterpenoid synthase; part of the gene cluster that mediates the biosynthesis of aspterpenacids. Performs both prenyl transferase and terpene cyclase activity, converting isopentenyl diphosphate and dimethylallyl diphosphate into geranylfarnesyl diphosphate (GFPP) and then converting GFPP into preaspterpenacid I. C22-oxidative modification of preaspterpenacid I by the cytochrome P450 monooxygenase sttB then leads to preaspterpenacid II. It has still to be determined how preaspterpenacid II is further modified to produce aspterpenacids. The protein is Preaspterpenacid I synthase sttA of Aspergillus terreus (strain NIH 2624 / FGSC A1156).